A 322-amino-acid chain; its full sequence is Digestive cysteine proteinase 1 (322 aa).

Positions Met-1–Ala-16 are cleaved as a signal peptide. The propeptide at Asn-17–Glu-105 is activation peptide. Cystine bridges form between Cys-126–Cys-170, Cys-160–Cys-203, and Cys-262–Cys-311. Cys-129 is an active-site residue. Catalysis depends on residues His-269 and Asn-289.

The protein belongs to the peptidase C1 family.

With respect to regulation, inhibited by E-64, antipain, leupeptin, heavy metal ions, iodoacetic acid, dithionitrobenzene, p-hydroxymercuri-benzoate; activated by mercaptoethanol and dithiothreitol. The polypeptide is Digestive cysteine proteinase 1 (LCP1) (Homarus americanus (American lobster)).